The following is a 124-amino-acid chain: Small ribosomal subunit protein uS13 (124 aa).

Positions 87 to 124 (GSYRGNRHRKRLPVRGQRTKTNSRTRKGKRRTVGSKTK) are disordered. The span at 91-124 (GNRHRKRLPVRGQRTKTNSRTRKGKRRTVGSKTK) shows a compositional bias: basic residues.

It belongs to the universal ribosomal protein uS13 family. As to quaternary structure, part of the 30S ribosomal subunit. Forms a loose heterodimer with protein S19. Forms two bridges to the 50S subunit in the 70S ribosome.

Its function is as follows. Located at the top of the head of the 30S subunit, it contacts several helices of the 16S rRNA. In the 70S ribosome it contacts the 23S rRNA (bridge B1a) and protein L5 of the 50S subunit (bridge B1b), connecting the 2 subunits; these bridges are implicated in subunit movement. Contacts the tRNAs in the A and P-sites. The protein is Small ribosomal subunit protein uS13 of Elusimicrobium minutum (strain Pei191).